The primary structure comprises 397 residues: uncharacterized protein (397 aa).

Transmembrane regions (helical) follow at residues 22-42 (ILTMLGIIIGVGSVIVVVAVG), 270-290 (IMTTIIGSIAGISLLVGGIGV), 327-347 (VVLTLIGGLVGIGIGYGGAAL), and 362-382 (VVCGGVLFSMLIGVIFGMLPA).

It belongs to the ABC-4 integral membrane protein family. In terms of assembly, part of a complex composed of YknX, YknY and YknZ. The complex interacts with YknW.

The protein resides in the cell membrane. It localises to the membrane raft. Functionally, part of an unusual four-component transporter, which is required for protection against the killing factor SdpC (sporulation-delaying protein). This is an uncharacterized protein from Bacillus subtilis (strain 168).